A 432-amino-acid polypeptide reads, in one-letter code: Alpha-2 adrenergic receptor (432 aa).

Residues 1 to 32 (MDPLNATGMDAFTAIHLNASWSADSGYSLAAI) lie on the Extracellular side of the membrane. Residues asparagine 5 and asparagine 18 are each glycosylated (N-linked (GlcNAc...) asparagine). The chain crosses the membrane as a helical span at residues 33–57 (ASIAALVSFLILFTVVGNILVVIAV). Topologically, residues 58 to 69 (LTSRALKAPQNL) are cytoplasmic. A helical transmembrane segment spans residues 70 to 95 (FLVSLATADILVATLVMPFSLANELM). At 96 to 105 (GYWYFGKVWC) the chain is on the extracellular side. Cysteines 105 and 183 form a disulfide. A helical transmembrane segment spans residues 106–128 (GIYLALDVLFCTSSIVHLCAISL). At 129–149 (DRYWSVTQAVEYNLKRTPKRV) the chain is on the cytoplasmic side. A helical membrane pass occupies residues 150–172 (KCIIVIVWLISAFISSPPLLSID). At 173 to 188 (SNNYISSQPQCMLNDD) the chain is on the extracellular side. The helical transmembrane segment at 189–212 (TWYILSSSMASFFAPCLIMILVYI) threads the bilayer. The Cytoplasmic segment spans residues 213–356 (RIYQVAKTRT…QAREKRFTFV (144 aa)). The disordered stretch occupies residues 222–319 (TRSMSGKEPR…SISKQSARIS (98 aa)). Polar residues-rich tracts occupy residues 235 to 246 (VTQTENGLNKAN) and 265 to 275 (SQRTVTIGQQT). Positions 288-300 (GKGHKPQRQDSQR) are enriched in basic and acidic residues. Residues 309–319 (SSISKQSARIS) show a composition bias toward polar residues. The helical transmembrane segment at 357 to 380 (LAVVMGVFVVCWFPFFFSYSLHAV) threads the bilayer. Residues 381-393 (CRDYCKIPDTLFK) are Extracellular-facing. The chain crosses the membrane as a helical span at residues 394–413 (FFWIGYCNSSLNPAIYTIFN). Over 414–432 (RDFRRAFQKILCKSWKKSF) the chain is Cytoplasmic.

It belongs to the G-protein coupled receptor 1 family.

Its subcellular location is the cell membrane. Functionally, alpha-2 adrenergic receptors mediate the catecholamine-induced inhibition of adenylate cyclase through the action of G proteins. The polypeptide is Alpha-2 adrenergic receptor (Labrus ossifagus (Cuckoo wrasse)).